A 165-amino-acid polypeptide reads, in one-letter code: V-type proton ATPase 16 kDa proteolipid subunit (165 aa).

Residues 1–12 lie on the Lumenal side of the membrane; it reads MSTVFNGDETAP. A helical membrane pass occupies residues 13-33; that stretch reads FFGFLGAAAALVFSCMGAAYG. Residues 34–55 are Cytoplasmic-facing; it reads TAKSGVGVASMGVMRPELVMKS. The helical transmembrane segment at 56–76 threads the bilayer; that stretch reads IVPVVMAGVLGIYGLIIAVII. At 77–95 the chain is on the lumenal side; that stretch reads STGINPKAKSYYLFDGYAH. The helical transmembrane segment at 96–117 threads the bilayer; it reads LSSGLACGLAGLSAGMAIGIVG. Over 118–129 the chain is Cytoplasmic; sequence DAGVRANAQQPK. A helical membrane pass occupies residues 130–155; the sequence is LFVGMILILIFAEALALYGLIVGIIL. The Lumenal portion of the chain corresponds to 156–165; it reads SSRAGQSRAD.

The protein belongs to the V-ATPase proteolipid subunit family. V-ATPase is a heteromultimeric enzyme composed of a peripheral catalytic V1 complex (main components: subunits A, B, C, D, E, and F) attached to an integral membrane V0 proton pore complex (main component: the proteolipid protein; which is present as a hexamer that forms the proton-conducting pore).

The protein localises to the vacuole membrane. Proton-conducting pore forming subunit of the membrane integral V0 complex of vacuolar ATPase. V-ATPase is responsible for acidifying a variety of intracellular compartments in eukaryotic cells. This is V-type proton ATPase 16 kDa proteolipid subunit (VMAC1) from Mesembryanthemum crystallinum (Common ice plant).